Here is a 542-residue protein sequence, read N- to C-terminus: Sialate O-acetylesterase (542 aa).

The signal sequence occupies residues 1–23; it reads MVSPRPVGLMLLLIIARVSRGAG. N-linked (GlcNAc...) asparagine glycosylation is found at N107, N138, N188, N294, N357, N428, N449, and N463.

In terms of assembly, disulfide-linked heterodimer of a small subunit and a large subunit. The two subunits are derived from a single precursor by proteolytic cleavage. Post-translationally, glycosylated. In terms of tissue distribution, widely expressed.

It is found in the lysosome. The enzyme catalyses N-acetyl-9-O-acetylneuraminate + H2O = N-acetylneuraminate + acetate + H(+). The catalysed reaction is an Ac-O-9-sialoglycoconjugate + H2O = a sialoglycoconjugate + acetate + H(+). Its activity is regulated as follows. Inhibited by diisopropyl fluorophosphate and diethyl-P-nitrophenyl phosphate. Catalyzes the removal of O-acetyl ester groups from position 9 of the free diacetylated sialate N-acetyl-9-O-acetylneuraminate (Neu5,9Ac2) in the cytosol and of the diacetylated sialate residues of sialylglycoconjugates in the lysosomes. Together with the sialate-O-acetyltransferase they regulate the balance of acetylated sialoglycoconjugates, key players in various processes such as cell-cell interactions, host-pathogen recognition, and tumor antigenicity. This Rattus norvegicus (Rat) protein is Sialate O-acetylesterase (Siae).